The following is a 480-amino-acid chain: Glutamate--tRNA ligase (480 aa).

Positions 21-31 (PSPTGYLHVGG) match the 'HIGH' region motif. The Zn(2+) site is built by Cys110, Cys112, Cys137, and His139. Positions 248–252 (KLSKR) match the 'KMSKS' region motif. Lys251 serves as a coordination point for ATP.

It belongs to the class-I aminoacyl-tRNA synthetase family. Glutamate--tRNA ligase type 1 subfamily. Monomer. Zn(2+) serves as cofactor.

Its subcellular location is the cytoplasm. The enzyme catalyses tRNA(Glu) + L-glutamate + ATP = L-glutamyl-tRNA(Glu) + AMP + diphosphate. Catalyzes the attachment of glutamate to tRNA(Glu) in a two-step reaction: glutamate is first activated by ATP to form Glu-AMP and then transferred to the acceptor end of tRNA(Glu). The protein is Glutamate--tRNA ligase of Haemophilus influenzae (strain PittEE).